The sequence spans 136 residues: Large ribosomal subunit protein uL16 (136 aa).

It belongs to the universal ribosomal protein uL16 family. Part of the 50S ribosomal subunit.

Binds 23S rRNA and is also seen to make contacts with the A and possibly P site tRNAs. This Shewanella sediminis (strain HAW-EB3) protein is Large ribosomal subunit protein uL16.